The following is a 504-amino-acid chain: Sodium-coupled neutral amino acid symporter 2 (504 aa).

Positions 1-22 (MKKTEMGRFNISPDEDSSSYSS) are disordered. The Cytoplasmic portion of the chain corresponds to 1-76 (MKKTEMGRFN…HPGTTSFGMS (76 aa)). The segment at 1–96 (MKKTEMGRFN…SGILGLSYAM (96 aa)) is regulates protein turnover upon amino acid deprivation. 4 positions are modified to phosphoserine: S12, S21, S22, and S55. A helical transmembrane segment spans residues 77–96 (VFNLSNAIVGSGILGLSYAM). N82 is a binding site for Na(+). The Extracellular portion of the chain corresponds to 97–102 (ANTGIA). The chain crosses the membrane as a helical span at residues 103 to 123 (LFIILLTFVSIFSLYSVHLLL). Residues 124-158 (KTANEGGSLLYEQLGHKAYGLAGKLAASGSITMQN) lie on the Cytoplasmic side of the membrane. Residues 159-177 (IGAMSSYLFIVKYELPLVI) traverse the membrane as a helical segment. Over 178 to 188 (KALMNIEDTNG) the chain is Extracellular. A helical membrane pass occupies residues 189-209 (LWYLNGDYLVLLVSFVLILPL). Residues 210 to 217 (SLLRNLGY) lie on the Cytoplasmic side of the membrane. The chain crosses the membrane as a helical span at residues 218 to 238 (LGYTSGLSLLCMIFFLIVVIC). Topologically, residues 239-290 (KKFQIPCPVEVALMANETVNGTFTQVALAALASNSTAADTCRPRYFIFNSQT) are extracellular. A disulfide bond links C245 and C279. N-linked (GlcNAc...) asparagine glycans are attached at residues N254, N258, and N272. Residues 291-311 (VYAVPILTFSFVCHPAVLPIY) traverse the membrane as a helical segment. Topologically, residues 312 to 327 (EELKSRSRRRMMNVSK) are cytoplasmic. A helical membrane pass occupies residues 328–348 (ISFFAMFLMYLLAALFGYLTF). Over 349–369 (YEHVESELLHTYSAIVGTDIL) the chain is Extracellular. Residues 370 to 390 (LLVVRLAVLVAVTLTVPVVIF) form a helical membrane-spanning segment. T384 lines the Na(+) pocket. Residues 391 to 411 (PIRSSVTHLLCPTKEFSWFRH) are Cytoplasmic-facing. A helical transmembrane segment spans residues 412–432 (SVITVTILAFTNLLVIFVPTI). Over 433–434 (RD) the chain is Extracellular. The chain crosses the membrane as a helical span at residues 435-455 (IFGFIGASAAAMLIFILPSAF). Over 456–470 (YIKLVKKEPMRSVQK) the chain is Cytoplasmic. A helical transmembrane segment spans residues 471 to 493 (IGALCFLLSGVVVMIGSMGLIVL). Topologically, residues 494–504 (DWVHDASAGGH) are extracellular.

It belongs to the amino acid/polyamine transporter 2 family. Polyubiquitination by NEDD4L regulates the degradation and the activity of SLC38A2. Widely expressed. Expressed in skeletal muscle and adipose tissue (at protein level). Expressed by glutamatergic and GABAergic neurons together with astrocytes and other non-neuronal cells in the cerebral cortex (at protein level). Widely expressed in the central nervous systeme where, it is enriched in the spinal cord and the brainstem nuclei, especially those of the auditory system.

Its subcellular location is the cell membrane. It carries out the reaction L-alanine(in) + Na(+)(in) = L-alanine(out) + Na(+)(out). The enzyme catalyses glycine(in) + Na(+)(in) = glycine(out) + Na(+)(out). It catalyses the reaction L-serine(in) + Na(+)(in) = L-serine(out) + Na(+)(out). The catalysed reaction is L-proline(in) + Na(+)(in) = L-proline(out) + Na(+)(out). It carries out the reaction L-methionine(in) + Na(+)(in) = L-methionine(out) + Na(+)(out). The enzyme catalyses L-histidine(in) + Na(+)(in) = L-histidine(out) + Na(+)(out). It catalyses the reaction L-asparagine(in) + Na(+)(in) = L-asparagine(out) + Na(+)(out). The catalysed reaction is L-glutamine(in) + Na(+)(in) = L-glutamine(out) + Na(+)(out). It carries out the reaction L-threonine(in) + Na(+)(in) = L-threonine(out) + Na(+)(out). The enzyme catalyses L-leucine(in) + Na(+)(in) = L-leucine(out) + Na(+)(out). It catalyses the reaction L-phenylalanine(in) + Na(+)(in) = L-phenylalanine(out) + Na(+)(out). Inhibited by N-methyl-D-glucamine. Inhibited by choline. Allosteric regulation of sodium ions binding by pH. Its function is as follows. Symporter that cotransports neutral amino acids and sodium ions from the extracellular to the intracellular side of the cell membrane. The transport is pH-sensitive, Li(+)-intolerant, electrogenic, driven by the Na(+) electrochemical gradient and cotransports of neutral amino acids and sodium ions with a stoichiometry of 1:1. May function in the transport of amino acids at the blood-brain barrier. May function in the transport of amino acids in the supply of maternal nutrients to the fetus through the placenta. Maintains a key metabolic glutamine/glutamate balance underpinning retrograde signaling by dendritic release of the neurotransmitter glutamate. Transports L-proline in differentiating osteoblasts for the efficient synthesis of proline-enriched proteins and provides proline essential for osteoblast differentiation and bone formation during bone development. This Rattus norvegicus (Rat) protein is Sodium-coupled neutral amino acid symporter 2.